Reading from the N-terminus, the 334-residue chain is Phosphate acyltransferase (334 aa).

This sequence belongs to the PlsX family. Homodimer. Probably interacts with PlsY.

It is found in the cytoplasm. The catalysed reaction is a fatty acyl-[ACP] + phosphate = an acyl phosphate + holo-[ACP]. Its pathway is lipid metabolism; phospholipid metabolism. In terms of biological role, catalyzes the reversible formation of acyl-phosphate (acyl-PO(4)) from acyl-[acyl-carrier-protein] (acyl-ACP). This enzyme utilizes acyl-ACP as fatty acyl donor, but not acyl-CoA. This is Phosphate acyltransferase from Streptococcus thermophilus (strain CNRZ 1066).